The chain runs to 848 residues: Trimethylamine-N-oxide reductase 1 (848 aa).

Positions 1-39 form a signal peptide, tat-type signal; that stretch reads MNNNDLFQASRRRFLAQLGGLTVAGMLGPSLLTPRRATA. Residue S191 coordinates Mo-bis(molybdopterin guanine dinucleotide).

It belongs to the prokaryotic molybdopterin-containing oxidoreductase family. In terms of assembly, interacts with the N-terminal domain of TorC. Requires Mo-bis(molybdopterin guanine dinucleotide) as cofactor. In terms of processing, exported by the Tat system. The position of the signal peptide cleavage has been experimentally proven.

It localises to the periplasm. The enzyme catalyses trimethylamine + 2 Fe(III)-[cytochrome c] + H2O = trimethylamine N-oxide + 2 Fe(II)-[cytochrome c] + 3 H(+). In terms of biological role, reduces trimethylamine-N-oxide (TMAO) into trimethylamine; an anaerobic reaction coupled to energy-yielding reactions. The chain is Trimethylamine-N-oxide reductase 1 (torA) from Escherichia coli (strain K12).